The sequence spans 467 residues: Asparagine--tRNA ligase (467 aa).

This sequence belongs to the class-II aminoacyl-tRNA synthetase family. Homodimer.

The protein localises to the cytoplasm. The enzyme catalyses tRNA(Asn) + L-asparagine + ATP = L-asparaginyl-tRNA(Asn) + AMP + diphosphate + H(+). This is Asparagine--tRNA ligase from Actinobacillus pleuropneumoniae serotype 3 (strain JL03).